The following is a 185-amino-acid chain: Peptidoglycan-recognition protein SC1a/b (185 aa).

Positions 1–21 are cleaved as a signal peptide; it reads MVSKVALLLAVLVCSQYMAQG. One can recognise an N-acetylmuramoyl-L-alanine amidase domain in the interval 46 to 170; sequence SYAIIHHTAG…RQVSATECPG (125 aa). Histidine 51 is a Zn(2+) binding site. The cysteines at positions 58 and 64 are disulfide-linked. Zn(2+) contacts are provided by histidine 160 and cysteine 168.

The protein belongs to the N-acetylmuramoyl-L-alanine amidase 2 family. Zn(2+) is required as a cofactor.

Its subcellular location is the secreted. It catalyses the reaction Hydrolyzes the link between N-acetylmuramoyl residues and L-amino acid residues in certain cell-wall glycopeptides.. Its function is as follows. N-acetylmuramyl-L-alanine amidase involved in innate immunity by degrading bacterial peptidoglycans (PGN). Plays a scavenger role by digesting biologically active PGN into biologically inactive fragments. Has no direct bacteriolytic activity. In Drosophila simulans (Fruit fly), this protein is Peptidoglycan-recognition protein SC1a/b (PGRP-SC1a).